A 159-amino-acid polypeptide reads, in one-letter code: Putative UPF0479 protein YDR545C-A (159 aa).

2 helical membrane passes run 38-58 (IVFC…KVLQ) and 135-155 (VPMI…ISQH).

The protein belongs to the UPF0479 family.

The protein localises to the membrane. This is Putative UPF0479 protein YDR545C-A from Saccharomyces cerevisiae (strain ATCC 204508 / S288c) (Baker's yeast).